The sequence spans 187 residues: UPF0340 protein SPP_0683 (187 aa).

This sequence belongs to the UPF0340 family.

The protein is UPF0340 protein SPP_0683 of Streptococcus pneumoniae (strain P1031).